The chain runs to 165 residues: Phosphopantetheine adenylyltransferase (165 aa).

Ser9 contributes to the substrate binding site. ATP contacts are provided by residues 9-10 (SF) and His17. The substrate site is built by Lys41, Val73, and Arg87. ATP is bound by residues 88–90 (GLR), Glu98, and 123–129 (FTLLSSS).

It belongs to the bacterial CoaD family. Homohexamer. Mg(2+) is required as a cofactor.

The protein resides in the cytoplasm. The catalysed reaction is (R)-4'-phosphopantetheine + ATP + H(+) = 3'-dephospho-CoA + diphosphate. The protein operates within cofactor biosynthesis; coenzyme A biosynthesis; CoA from (R)-pantothenate: step 4/5. In terms of biological role, reversibly transfers an adenylyl group from ATP to 4'-phosphopantetheine, yielding dephospho-CoA (dPCoA) and pyrophosphate. This Herpetosiphon aurantiacus (strain ATCC 23779 / DSM 785 / 114-95) protein is Phosphopantetheine adenylyltransferase.